The following is a 335-amino-acid chain: Interleukin-12 subunit beta (335 aa).

The signal sequence occupies residues 1–22 (MCPQKLTISWFAIVLLVSPLMA). Residues 23–106 (MWELEKDVYV…LSHSHLLLHK (84 aa)) form the Ig-like C2-type domain. The N-linked (GlcNAc...) asparagine glycan is linked to Asn47. An intrachain disulfide couples Cys50 to Cys90. 3 N-linked (GlcNAc...) asparagine glycosylation sites follow: Asn122, Asn132, and Asn220. One can recognise a Fibronectin type-III domain in the interval 233–324 (PDPPKNLQMK…QDRYYNSSCS (92 aa)).

Belongs to the IL-12B family. As to quaternary structure, heterodimer with IL12A; disulfide-linked. The heterodimer is known as interleukin IL-12. Heterodimer with IL23A; disulfide-linked. The heterodimer is known as interleukin IL-23. Also secreted as a monomer. Interacts with NBR1; this interaction promotes IL-12 secretion.

It localises to the secreted. In terms of biological role, cytokine that can act as a growth factor for activated T and NK cells, enhance the lytic activity of NK/lymphokine-activated killer cells, and stimulate the production of IFN-gamma by resting PBMC. Functionally, associates with IL23A to form the IL-23 interleukin, a heterodimeric cytokine which functions in innate and adaptive immunity. IL-23 may constitute with IL-17 an acute response to infection in peripheral tissues. IL-23 binds to a heterodimeric receptor complex composed of IL12RB1 and IL23R, activates the Jak-Stat signaling cascade, stimulates memory rather than naive T-cells and promotes production of pro-inflammatory cytokines. IL-23 induces autoimmune inflammation and thus may be responsible for autoimmune inflammatory diseases and may be important for tumorigenesis. The protein is Interleukin-12 subunit beta (Il12b) of Mus musculus (Mouse).